A 550-amino-acid chain; its full sequence is Envelope glycoprotein E (550 aa).

Residues 1-23 (MELLAASRACIFFGLVTVLDAWG) form the signal peptide. The Virion surface portion of the chain corresponds to 24-408 (VQQVELSEGA…GAWTRHYLAF (385 aa)). N-linked (GlcNAc...) asparagine; by host glycosylation is present at Asn47. Residues 65-91 (CAGDISVKKVCVSHSLCEDNIIIGKHC) form an interaction with gI region. N-linked (GlcNAc...) asparagine; by host glycans are attached at residues Asn109, Asn122, and Asn241. 2 cysteine pairs are disulfide-bonded: Cys247-Cys273 and Cys256-Cys265. Asn291 carries an N-linked (GlcNAc...) asparagine; by host glycan. Cys292 and Cys303 are oxidised to a cystine. The chain crosses the membrane as a helical span at residues 409–425 (LLVIICTCAALLVALVV). Residues 426 to 550 (WGCILYIRSN…VASKLKSILK (125 aa)) lie on the Intravirion side of the membrane. The Internalization motif motif lies at 449 to 452 (YTSV). The acidic stretch occupies residues 468–482 (ASDSDDSFDSDSDEE). Acidic residues predominate over residues 471 to 484 (SDDSFDSDSDEELE). The disordered stretch occupies residues 471–513 (SDDSFDSDSDEELEYPPPPKPAPQLPPYQFVDGGDAPSGRSGF). Residues 485–496 (YPPPPKPAPQLP) show a composition bias toward pro residues.

The protein belongs to the alphaherpesvirinae glycoprotein E family. In terms of assembly, interacts with gI. In terms of processing, phosphorylated on serines within the acidic cluster. Phosphorylation determines whether endocytosed viral gE traffics to the trans-Golgi network or recycles to the cell membrane.

Its subcellular location is the virion membrane. It is found in the host cell membrane. It localises to the host cell junction. The protein localises to the host Golgi apparatus membrane. The protein resides in the host endosome membrane. Functionally, in epithelial cells, the heterodimer gE/gI is required for the cell-to-cell spread of the virus, by sorting nascent virions to cell junctions. Once the virus reaches the cell junctions, virus particles can spread to adjacent cells extremely rapidly through interactions with cellular receptors that accumulate at these junctions. Implicated in basolateral spread in polarized cells. In neuronal cells, gE/gI is essential for the anterograde spread of the infection throughout the host nervous system. Together with US9, the heterodimer gE/gI is involved in the sorting and transport of viral structural components toward axon tips. The sequence is that of Envelope glycoprotein E (gE) from Equus caballus (Horse).